A 503-amino-acid chain; its full sequence is Proton-coupled zinc antiporter SLC30A1 (503 aa).

At 1–10 (MGCWGRNRGR) the chain is on the cytoplasmic side. Residues 11-31 (LLCMLLLTFMFMVLEVVVSRV) traverse the membrane as a helical segment. The Extracellular portion of the chain corresponds to 32–35 (TASL). A helical transmembrane segment spans residues 36–56 (AMLSDSFHMLSDVLALVVALV). 2 residues coordinate Zn(2+): His-43 and Asp-47. The Cytoplasmic segment spans residues 57 to 78 (AERFARRTHATQKNTFGWIRAE). The helical transmembrane segment at 79 to 99 (VMGALVNAIFLTGLCFAILLE) threads the bilayer. The Extracellular segment spans residues 100-113 (AVERFIEPHEMQQP). The helical transmembrane segment at 114 to 134 (LVVLSVGVAGLLVNVLGLCLF) threads the bilayer. Residues 135–243 (HHHSGEGQGA…RAGQLNMRGV (109 aa)) lie on the Cytoplasmic side of the membrane. The segment at 140-213 (EGQGAGHGHS…PEKLRSDDPV (74 aa)) is disordered. Residues 145–156 (GHGHSHGHGHGH) are 6 X 2 AA approximate repeats of H-G. Residues 147–165 (GHSHGHGHGHLAKGARKAG) are compositionally biased toward basic residues. The span at 184–196 (TNTLVANTSNSNG) shows a compositional bias: polar residues. The span at 200-211 (DQAEPEKLRSDD) shows a compositional bias: basic and acidic residues. A helical transmembrane segment spans residues 244–264 (FLHVLGDALGSVIVVVNALVF). Zn(2+)-binding residues include His-246 and Asp-250. Topologically, residues 265 to 303 (YFNWKGCTEDDFCTNPCFPDPCKSSVEIINSTQAPMRDA) are extracellular. The N-linked (GlcNAc...) asparagine glycan is linked to Asn-294. Residues 304–324 (GPCWVLYLDPTLCIIMVCILL) traverse the membrane as a helical segment. Residues 325-503 (YTTYPLLKES…VPNKQPESSL (179 aa)) lie on the Cytoplasmic side of the membrane. Ser-502 is subject to Phosphoserine.

This sequence belongs to the cation diffusion facilitator (CDF) transporter (TC 2.A.4) family. SLC30A subfamily. Homodimer. Interacts with TMEM163. Interacts and forms a complex with TMC6 and TMC8; the interaction regulates zinc transport into the ER. In terms of tissue distribution, widely expressed.

It is found in the cell membrane. Its subcellular location is the basolateral cell membrane. It localises to the cytoplasmic vesicle membrane. The protein resides in the cytoplasm. The protein localises to the endoplasmic reticulum membrane. It is found in the golgi apparatus membrane. Its subcellular location is the nucleus membrane. It catalyses the reaction Zn(2+)(in) + 2 H(+)(out) = Zn(2+)(out) + 2 H(+)(in). Zinc ion:proton antiporter that could function at the plasma membrane mediating zinc efflux from cells against its electrochemical gradient protecting them from intracellular zinc accumulation and toxicity. Alternatively, could prevent the transport to the plasma membrane of CACNB2, the L-type calcium channels regulatory subunit, through a yet to be defined mechanism. By modulating the expression of these channels at the plasma membrane, could prevent calcium and zinc influx into cells. By the same mechanism, could also prevent L-type calcium channels-mediated heavy metal influx into cells. In some cells, could also function as a zinc ion:proton antiporter mediating zinc entry into the lumen of cytoplasmic vesicles. In macrophages, can increase zinc ions concentration into the lumen of cytoplasmic vesicles containing engulfed bacteria and could help inactivate them. Forms a complex with TMC6/EVER1 and TMC8/EVER2 at the ER membrane of keratynocytes which facilitates zinc uptake into the ER. Down-regulates the activity of transcription factors induced by zinc and cytokines. The sequence is that of Proton-coupled zinc antiporter SLC30A1 from Mus musculus (Mouse).